The sequence spans 62 residues: U10-hottentoxin-Hj2a (62 aa).

The first 22 residues, 1 to 22, serve as a signal peptide directing secretion; it reads MQKLLIILILFCILKFNVDVEG. Disulfide bonds link cysteine 28–cysteine 46, cysteine 33–cysteine 59, and cysteine 37–cysteine 61.

This sequence belongs to the short scorpion toxin superfamily. Potassium channel inhibitor family. Alpha-KTx 23 subfamily. As to expression, expressed by the venom gland.

The protein localises to the secreted. In terms of biological role, may block potassium channels. The protein is U10-hottentoxin-Hj2a of Hottentotta judaicus (Black scorpion).